The sequence spans 386 residues: uncharacterized protein (386 aa).

Position 185 is an N6-(pyridoxal phosphate)lysine (Lys-185).

Belongs to the DegT/DnrJ/EryC1 family. Pyridoxal 5'-phosphate serves as cofactor.

This is an uncharacterized protein from Methanocaldococcus jannaschii (strain ATCC 43067 / DSM 2661 / JAL-1 / JCM 10045 / NBRC 100440) (Methanococcus jannaschii).